Here is a 147-residue protein sequence, read N- to C-terminus: Orcokinin peptides (147 aa).

The first 27 residues, 1 to 27, serve as a signal peptide directing secretion; it reads MPRHSVFALSILALSITATVWIPTVQA. 2 propeptides span residues 28–89 and 146–147; these read ETNL…ERFG and FG.

It belongs to the orcokinin family.

Its subcellular location is the secreted. Functionally, myotropic peptides. In Apis mellifera (Honeybee), this protein is Orcokinin peptides.